The primary structure comprises 559 residues: Formate--tetrahydrofolate ligase (559 aa).

67 to 74 is an ATP binding site; that stretch reads TPAGEGKS.

This sequence belongs to the formate--tetrahydrofolate ligase family.

The catalysed reaction is (6S)-5,6,7,8-tetrahydrofolate + formate + ATP = (6R)-10-formyltetrahydrofolate + ADP + phosphate. It participates in one-carbon metabolism; tetrahydrofolate interconversion. The polypeptide is Formate--tetrahydrofolate ligase (Lactobacillus delbrueckii subsp. bulgaricus (strain ATCC 11842 / DSM 20081 / BCRC 10696 / JCM 1002 / NBRC 13953 / NCIMB 11778 / NCTC 12712 / WDCM 00102 / Lb 14)).